The sequence spans 181 residues: Transcriptional repressor NrdR (181 aa).

Residues Cys-3–Cys-34 fold into a zinc finger. An ATP-cone domain is found at Ile-49–Asp-139.

It belongs to the NrdR family. Zn(2+) serves as cofactor.

Functionally, negatively regulates transcription of bacterial ribonucleotide reductase nrd genes and operons by binding to NrdR-boxes. This Picosynechococcus sp. (strain ATCC 27264 / PCC 7002 / PR-6) (Agmenellum quadruplicatum) protein is Transcriptional repressor NrdR.